The following is a 483-amino-acid chain: 6-phosphogluconate dehydrogenase, decarboxylating (483 aa).

NADP(+)-binding positions include 10–15 and 33–35; these read GLAVMG and NRT. Lysine 38 is subject to N6-acetyllysine. Serine 57 is subject to Phosphoserine. Residue lysine 59 is modified to N6-acetyllysine. Residues 75–77 and asparagine 103 each bind NADP(+); that span reads VKA. Residues asparagine 103 and 129–131 contribute to the substrate site; that span reads SGG. Serine 129 carries the post-translational modification Phosphoserine. Lysine 184 acts as the Proton acceptor in catalysis. Residue 187 to 188 coordinates substrate; the sequence is HN. The Proton donor role is filled by glutamate 191. Residues tyrosine 192, lysine 261, arginine 288, arginine 447, and histidine 453 each coordinate substrate. Residue 478 to 481 participates in NADP(+) binding; sequence SSSY.

Belongs to the 6-phosphogluconate dehydrogenase family. Homodimer.

It localises to the cytoplasm. It carries out the reaction 6-phospho-D-gluconate + NADP(+) = D-ribulose 5-phosphate + CO2 + NADPH. It participates in carbohydrate degradation; pentose phosphate pathway; D-ribulose 5-phosphate from D-glucose 6-phosphate (oxidative stage): step 3/3. In terms of biological role, catalyzes the oxidative decarboxylation of 6-phosphogluconate to ribulose 5-phosphate and CO(2), with concomitant reduction of NADP to NADPH. The protein is 6-phosphogluconate dehydrogenase, decarboxylating (Pgd) of Mus musculus (Mouse).